The chain runs to 248 residues: 1-(5-phosphoribosyl)-5-[(5-phosphoribosylamino)methylideneamino] imidazole-4-carboxamide isomerase (248 aa).

Asp-8 functions as the Proton acceptor in the catalytic mechanism. Residue Asp-129 is the Proton donor of the active site.

It belongs to the HisA/HisF family.

It localises to the cytoplasm. The enzyme catalyses 1-(5-phospho-beta-D-ribosyl)-5-[(5-phospho-beta-D-ribosylamino)methylideneamino]imidazole-4-carboxamide = 5-[(5-phospho-1-deoxy-D-ribulos-1-ylimino)methylamino]-1-(5-phospho-beta-D-ribosyl)imidazole-4-carboxamide. It functions in the pathway amino-acid biosynthesis; L-histidine biosynthesis; L-histidine from 5-phospho-alpha-D-ribose 1-diphosphate: step 4/9. This Rhizobium johnstonii (strain DSM 114642 / LMG 32736 / 3841) (Rhizobium leguminosarum bv. viciae) protein is 1-(5-phosphoribosyl)-5-[(5-phosphoribosylamino)methylideneamino] imidazole-4-carboxamide isomerase.